Reading from the N-terminus, the 190-residue chain is Small ribosomal subunit protein uS5 (190 aa).

In terms of domain architecture, S5 DRBM spans 22–85; sequence FVDKLVHINR…DSAKRNLTRV (64 aa).

The protein belongs to the universal ribosomal protein uS5 family. As to quaternary structure, part of the 30S ribosomal subunit. Contacts proteins S4 and S8.

With S4 and S12 plays an important role in translational accuracy. In terms of biological role, located at the back of the 30S subunit body where it stabilizes the conformation of the head with respect to the body. This chain is Small ribosomal subunit protein uS5, found in Bradyrhizobium sp. (strain BTAi1 / ATCC BAA-1182).